The chain runs to 90 residues: Bombyxin B-9 (90 aa).

An N-terminal signal peptide occupies residues Met1–Ser20. Cystine bridges form between Cys30–Cys75, Cys42–Cys88, and Cys74–Cys79. The propeptide at Gly49 to Ser64 is c peptide like.

It belongs to the insulin family. As to quaternary structure, heterodimer of a B chain and an A chain linked by two disulfide bonds.

The protein resides in the secreted. Functionally, brain peptide responsible for activation of prothoracic glands to produce ecdysone in insects. In Bombyx mori (Silk moth), this protein is Bombyxin B-9 (BBXB9).